Here is a 614-residue protein sequence, read N- to C-terminus: Pyrophosphate--fructose 6-phosphate 1-phosphotransferase subunit alpha 1 (614 aa).

It belongs to the phosphofructokinase type A (PFKA) family. PPi-dependent PFK group II subfamily. Clade 'Long' sub-subfamily. As to quaternary structure, tetramer of two alpha (regulatory) and two beta (catalytic) chains. In terms of tissue distribution, expressed in leaves, roots, and flowers (e.g. sepals, petals, stamen and gynoecium).

It localises to the cytoplasm. It participates in carbohydrate degradation; glycolysis; D-glyceraldehyde 3-phosphate and glycerone phosphate from D-glucose: step 3/4. Its activity is regulated as follows. Allosterically activated by fructose 2,6-bisphosphate. In terms of biological role, regulatory subunit of pyrophosphate--fructose 6-phosphate 1-phosphotransferase. The polypeptide is Pyrophosphate--fructose 6-phosphate 1-phosphotransferase subunit alpha 1 (Arabidopsis thaliana (Mouse-ear cress)).